The chain runs to 130 residues: Insulin-like growth factor 1 (130 aa).

An N-terminal signal peptide occupies residues 1–25 (MHAVSSSHLFYLAFCLLVLTSSATA). The segment at 26 to 54 (GPETLCGAELVDALQFVCGDRGFYFNKPT) is b. 3 disulfides stabilise this stretch: cysteine 31–cysteine 73, cysteine 43–cysteine 86, and cysteine 72–cysteine 77. Residues 55–66 (GYGSSSRRAPQT) form a c region. Positions 67-87 (GIVDECCFRSCDLRRLEMYCA) are a. The d stretch occupies residues 88-95 (PLKPAKSA). Residues 96–130 (RSVRAQRHTDMPKTQKEVHLKNASRGSAGNKNYRM) constitute a propeptide, e peptide. The segment at 97-130 (SVRAQRHTDMPKTQKEVHLKNASRGSAGNKNYRM) is disordered. Positions 102 to 115 (RHTDMPKTQKEVHL) are enriched in basic and acidic residues. Residues 119–130 (SRGSAGNKNYRM) are compositionally biased toward polar residues.

This sequence belongs to the insulin family. In terms of assembly, forms a ternary complex with IGFR1 and ITGAV:ITGB3. Forms a ternary complex with IGFR1 and ITGA6:ITGB4. Forms a ternary complex with IGFBP3 and ALS.

The protein localises to the secreted. The insulin-like growth factors, isolated from plasma, are structurally and functionally related to insulin but have a much higher growth-promoting activity. May be a physiological regulator of [1-14C]-2-deoxy-D-glucose (2DG) transport and glycogen synthesis in osteoblasts. Stimulates glucose transport in bone-derived osteoblastic (PyMS) cells and is effective at much lower concentrations than insulin, not only regarding glycogen and DNA synthesis but also with regard to enhancing glucose uptake. May play a role in synapse maturation. Ca(2+)-dependent exocytosis of IGF1 is required for sensory perception of smell in the olfactory bulb. Acts as a ligand for IGF1R. Binds to the alpha subunit of IGF1R, leading to the activation of the intrinsic tyrosine kinase activity which autophosphorylates tyrosine residues in the beta subunit thus initiating a cascade of down-stream signaling events leading to activation of the PI3K-AKT/PKB and the Ras-MAPK pathways. Binds to integrins ITGAV:ITGB3 and ITGA6:ITGB4. Its binding to integrins and subsequent ternary complex formation with integrins and IGFR1 are essential for IGF1 signaling. Induces the phosphorylation and activation of IGFR1, MAPK3/ERK1, MAPK1/ERK2 and AKT1. As part of the MAPK/ERK signaling pathway, acts as a negative regulator of apoptosis in cardiomyocytes via promotion of STUB1/CHIP-mediated ubiquitination and degradation of ICER-type isoforms of CREM. In Cavia porcellus (Guinea pig), this protein is Insulin-like growth factor 1.